A 277-amino-acid polypeptide reads, in one-letter code: Probable redox regulatory protein ML2435 (277 aa).

It belongs to the Rv0495c family.

Its function is as follows. Essential for maintaining intracellular redox homeostasis. The sequence is that of Probable redox regulatory protein ML2435 from Mycobacterium leprae (strain TN).